The chain runs to 161 residues: Nucleotide-binding protein Spea_3114 (161 aa).

The protein belongs to the YajQ family.

In terms of biological role, nucleotide-binding protein. This Shewanella pealeana (strain ATCC 700345 / ANG-SQ1) protein is Nucleotide-binding protein Spea_3114.